Here is a 1074-residue protein sequence, read N- to C-terminus: Insulin receptor substrate 2-A (1074 aa).

Residues 1-64 (MAGVLCPTEE…PPASAAEDDV (64 aa)) form a disordered region. 2 short sequence motifs (YXXM motif) span residues 33 to 36 (YRRM) and 145 to 148 (YFAM). The PH domain occupies 63 to 168 (DVRKRGYLRK…WYQALSELIN (106 aa)). In terms of domain architecture, IRS-type PTB spans 193-297 (FKEVWQVNVK…DTMKALKAYS (105 aa)). Disordered regions lie at residues 326–370 (PPSQ…RPFR), 426–461 (CSSSGHGSASETLTRPSSSSVCGSPSDGGFISSDEY), and 475–510 (SNTPDSLGNTPPIQEENTLSDYMSMSTHSQPDSRDD). Polar residues predominate over residues 347-361 (SAKNNSFRFRTSSEG). Composition is skewed to low complexity over residues 426–435 (CSSSGHGSAS) and 442–454 (SSSSVCGSPSDGG). Polar residues predominate over residues 475 to 504 (SNTPDSLGNTPPIQEENTLSDYMSMSTHSQ). 6 consecutive short sequence motifs (YXXM motif) follow at residues 496–499 (YMSM), 592–595 (YMPM), 605–608 (YLPM), 631–634 (YMMM), 663–666 (YMDM), and 710–713 (YVPM). Residues 801-821 (TPYSLSADGSPSSLGSSCDHR) are disordered. Low complexity predominate over residues 804–817 (SLSADGSPSSLGSS). Positions 888 to 891 (YTTM) match the YXXM motif 9 motif.

In terms of processing, phosphorylated by INSR.

In terms of biological role, potentiates insulin signaling. This chain is Insulin receptor substrate 2-A (irs2-a), found in Xenopus laevis (African clawed frog).